Consider the following 577-residue polypeptide: Chaperonin CPN60-1, mitochondrial (577 aa).

Residues 1-34 (MYRAAASLASKARQAGNSLATRQVGSRLAWSRNY) constitute a mitochondrion transit peptide.

Belongs to the chaperonin (HSP60) family.

It is found in the mitochondrion. Functionally, implicated in mitochondrial protein import and macromolecular assembly. May facilitate the correct folding of imported proteins. May also prevent misfolding and promote the refolding and proper assembly of unfolded polypeptides generated under stress conditions in the mitochondrial matrix. This is Chaperonin CPN60-1, mitochondrial (CPN60I) from Zea mays (Maize).